The primary structure comprises 20 residues: Luminal-binding protein (20 aa).

It belongs to the heat shock protein 70 family.

It is found in the endoplasmic reticulum lumen. Probably plays a role in facilitating the assembly of multimeric protein complexes inside the ER. The chain is Luminal-binding protein from Phaseolus vulgaris (Kidney bean).